The primary structure comprises 431 residues: Ubiquitin-like modifier-activating enzyme 5 (431 aa).

ATP contacts are provided by G92, D113, K136, N159, and N197. Zn(2+) is bound by residues C239 and C242. C263 acts as the Glycyl thioester intermediate in catalysis. Zn(2+) is bound by residues C316 and C321. The segment at 339 to 396 is disordered; it reads AKAKMEADASTTIDEGPLHDDNEWNISVVDDENEKDTTKAASSSDTLPEGLTRELPVA.

The protein belongs to the ubiquitin-activating E1 family. UBA5 subfamily.

In terms of biological role, E1-like enzyme which activates UFM1. This Arabidopsis thaliana (Mouse-ear cress) protein is Ubiquitin-like modifier-activating enzyme 5.